Here is a 453-residue protein sequence, read N- to C-terminus: DNA repair protein RadA (453 aa).

A C4-type zinc finger spans residues 10–27 (CTECGATFPKWAGQCADC). 96–103 (GDPGIGKS) lines the ATP pocket. The RadA KNRFG motif signature appears at 252–256 (KNRFG). Positions 351–453 (DVFLNVVGGV…LEQALDALFE (103 aa)) are lon-protease-like.

Belongs to the RecA family. RadA subfamily.

In terms of biological role, DNA-dependent ATPase involved in processing of recombination intermediates, plays a role in repairing DNA breaks. Stimulates the branch migration of RecA-mediated strand transfer reactions, allowing the 3' invading strand to extend heteroduplex DNA faster. Binds ssDNA in the presence of ADP but not other nucleotides, has ATPase activity that is stimulated by ssDNA and various branched DNA structures, but inhibited by SSB. Does not have RecA's homology-searching function. This chain is DNA repair protein RadA, found in Pseudomonas aeruginosa (strain ATCC 15692 / DSM 22644 / CIP 104116 / JCM 14847 / LMG 12228 / 1C / PRS 101 / PAO1).